The sequence spans 318 residues: DNA-directed RNA polymerase subunit alpha 2 (318 aa).

The alpha N-terminal domain (alpha-NTD) stretch occupies residues 1 to 227; the sequence is MALENLLHPT…NQLRNILDIE (227 aa). An alpha C-terminal domain (alpha-CTD) region spans residues 242-318; the sequence is INPILLKHVE…TLIENWPQDL (77 aa).

Belongs to the RNA polymerase alpha chain family. As to quaternary structure, homodimer. The RNAP catalytic core consists of 2 alpha, 1 beta, 1 beta' and 1 omega subunit. When a sigma factor is associated with the core the holoenzyme is formed, which can initiate transcription.

It catalyses the reaction RNA(n) + a ribonucleoside 5'-triphosphate = RNA(n+1) + diphosphate. Functionally, DNA-dependent RNA polymerase catalyzes the transcription of DNA into RNA using the four ribonucleoside triphosphates as substrates. This chain is DNA-directed RNA polymerase subunit alpha 2, found in Francisella tularensis subsp. tularensis (strain FSC 198).